The primary structure comprises 137 residues: Large ribosomal subunit protein uL16 (137 aa).

It belongs to the universal ribosomal protein uL16 family. As to quaternary structure, part of the 50S ribosomal subunit.

Functionally, binds 23S rRNA and is also seen to make contacts with the A and possibly P site tRNAs. This chain is Large ribosomal subunit protein uL16, found in Mycoplasma mycoides subsp. mycoides SC (strain CCUG 32753 / NCTC 10114 / PG1).